The sequence spans 462 residues: MLTVLAFVFAIAVLIVVHELGHYSVARLCGVKVLRFSVGFGKVLFRRVGRGPDRTEWTLCAIPLGGYVKMLGESARDPERDPPIPPEDLPRTFDHQPVYKRFAIVAAGPVFNFLLAIALYALLAWVGAQEPLPILGAPPPGSIAAQADLRAKDRVVAVGTDEEAPTPVRAWSDVRMRLYEAGIGGRDAIVQVRGADGAERTVRLRELPSAARSPQVDVIEQVGLRLLGGPVTIAEVLPGSAGERAGLRRGDQIVRFAGQPADQASDLIRWIRAMPEQNASIDILRDGLPMTLPVRLGADADSANPGGPKLGKLGAQLSQHVETELIRDEPVHALGHAMREVWRTSMLSLKVLGKMIVGQASLQNLSGPITVADFAGKAASLGWQSFVAFLALISVSLGVLNLLPVPVLDGGHLLYYCVEFLTGKPVPESWQAVLQKIGIACILLLTSLALYNDLSRLFLAHG.

The chain crosses the membrane as a helical span at residues 1–21 (MLTVLAFVFAIAVLIVVHELG). His-18 is a Zn(2+) binding site. Residue Glu-19 is part of the active site. Zn(2+) is bound at residue His-22. Residues 102-124 (FAIVAAGPVFNFLLAIALYALLA) form a helical membrane-spanning segment. Positions 201–283 (TVRLRELPSA…MPEQNASIDI (83 aa)) constitute a PDZ domain. The next 2 membrane-spanning stretches (helical) occupy residues 386-406 (FVAF…LPVP) and 430-450 (WQAV…SLAL).

Belongs to the peptidase M50B family. It depends on Zn(2+) as a cofactor.

Its subcellular location is the cell inner membrane. The polypeptide is Putative zinc metalloprotease RSc1411 (Ralstonia nicotianae (strain ATCC BAA-1114 / GMI1000) (Ralstonia solanacearum)).